We begin with the raw amino-acid sequence, 438 residues long: tRNA modification GTPase MnmE (438 aa).

(6S)-5-formyl-5,6,7,8-tetrahydrofolate is bound by residues R20, E79, and K119. The 146-residue stretch at 215-360 (GVEVAIVGPP…LEAALAARVG (146 aa)) folds into the TrmE-type G domain. Residues 225 to 230 (NAGKSS), 244 to 250 (SDEAGTT), and 269 to 272 (DTAG) each bind GTP. 2 residues coordinate Mg(2+): S229 and T250. (6S)-5-formyl-5,6,7,8-tetrahydrofolate is bound at residue K438.

Belongs to the TRAFAC class TrmE-Era-EngA-EngB-Septin-like GTPase superfamily. TrmE GTPase family. Homodimer. Heterotetramer of two MnmE and two MnmG subunits. The cofactor is K(+).

The protein resides in the cytoplasm. Functionally, exhibits a very high intrinsic GTPase hydrolysis rate. Involved in the addition of a carboxymethylaminomethyl (cmnm) group at the wobble position (U34) of certain tRNAs, forming tRNA-cmnm(5)s(2)U34. This Parvibaculum lavamentivorans (strain DS-1 / DSM 13023 / NCIMB 13966) protein is tRNA modification GTPase MnmE.